A 378-amino-acid chain; its full sequence is RIB43A-like with coiled-coils protein 1 (378 aa).

Coiled-coil stretches lie at residues 153–250 and 279–334; these read RMQQ…VTSD and EQRA…CAEF.

Belongs to the RIB43A family. As to quaternary structure, microtubule inner protein component of sperm flagellar doublet microtubules.

It localises to the cytoplasm. The protein resides in the cytoskeleton. The protein localises to the flagellum axoneme. The chain is RIB43A-like with coiled-coils protein 1 (Ribc1) from Rattus norvegicus (Rat).